The chain runs to 80 residues: Small ribosomal subunit protein uS17 (80 aa).

This sequence belongs to the universal ribosomal protein uS17 family. In terms of assembly, part of the 30S ribosomal subunit.

One of the primary rRNA binding proteins, it binds specifically to the 5'-end of 16S ribosomal RNA. The chain is Small ribosomal subunit protein uS17 from Microcystis aeruginosa (strain NIES-843 / IAM M-2473).